A 439-amino-acid polypeptide reads, in one-letter code: GTPase Der (439 aa).

EngA-type G domains are found at residues 4 to 168 (PIVA…KDDE) and 177 to 352 (INIA…DNYT). GTP contacts are provided by residues 10–17 (GRPNVGKS), 57–61 (DTGGI), 120–123 (NKID), 183–190 (GKPNVGKS), 230–234 (DTAGL), and 295–298 (NKWD). The 85-residue stretch at 353–437 (KRVKTGVLND…GIKLEFRERK (85 aa)) folds into the KH-like domain.

It belongs to the TRAFAC class TrmE-Era-EngA-EngB-Septin-like GTPase superfamily. EngA (Der) GTPase family. Associates with the 50S ribosomal subunit.

Functionally, GTPase that plays an essential role in the late steps of ribosome biogenesis. The chain is GTPase Der from Clostridium botulinum (strain Okra / Type B1).